The following is a 131-amino-acid chain: Large ribosomal subunit protein bL21 (131 aa).

A compositionally biased stretch (basic and acidic residues) spans 106–116 (TIDDMPKKEAA). The interval 106–131 (TIDDMPKKEAAPAKARRSTKKAAAAE) is disordered.

This sequence belongs to the bacterial ribosomal protein bL21 family. As to quaternary structure, part of the 50S ribosomal subunit. Contacts protein L20.

In terms of biological role, this protein binds to 23S rRNA in the presence of protein L20. The chain is Large ribosomal subunit protein bL21 from Koribacter versatilis (strain Ellin345).